We begin with the raw amino-acid sequence, 421 residues long: Imidazolonepropionase (421 aa).

Residues H80 and H82 each coordinate Fe(3+). 2 residues coordinate Zn(2+): H80 and H82. Residues R89, Y152, and H185 each coordinate 4-imidazolone-5-propanoate. Y152 provides a ligand contact to N-formimidoyl-L-glutamate. H249 contributes to the Fe(3+) binding site. H249 contacts Zn(2+). A 4-imidazolone-5-propanoate-binding site is contributed by E252. D324 contributes to the Fe(3+) binding site. D324 is a binding site for Zn(2+). Residues N326 and G328 each coordinate N-formimidoyl-L-glutamate. Residue S329 participates in 4-imidazolone-5-propanoate binding.

The protein belongs to the metallo-dependent hydrolases superfamily. HutI family. In terms of assembly, homodimer. It depends on Zn(2+) as a cofactor. Fe(3+) serves as cofactor.

Its subcellular location is the cytoplasm. It catalyses the reaction 4-imidazolone-5-propanoate + H2O = N-formimidoyl-L-glutamate. The protein operates within amino-acid degradation; L-histidine degradation into L-glutamate; N-formimidoyl-L-glutamate from L-histidine: step 3/3. In terms of biological role, catalyzes the hydrolytic cleavage of the carbon-nitrogen bond in imidazolone-5-propanoate to yield N-formimidoyl-L-glutamate. It is the third step in the universal histidine degradation pathway. In Bacillus subtilis (strain 168), this protein is Imidazolonepropionase.